Here is a 1020-residue protein sequence, read N- to C-terminus: MPKNNAIHSIAVIGSGPIKIGQAAEFDYAGTQACLSLKAAGYHVILINSNPATIMTDTATADEVYLEPLTLTSVTKILRAAHPDALLPTLGGQTGLNLAMALDQAGVLNELKIQLLGTSLATINQAEDRAAFKTLMKRLHQPIPASTTVHHVTSALSFAEKIGYPVIVRPAFTLGGSGGGIANNAAELTQTLQRGLTMSPVTECLIEQSIAGFKEIEFEVMRDNQGTKIIVCSMENFDPVGIHTGDSIVYAPVQTLTDTEYQQLRTAALTIVEALDIRGGYNVQLAQDPNSRQYYVIEVNPRVSRSSALASKATGYPIAKIAADIAIGLNLSEIKNPVTQTTYAAFEPALDYVVAKIPRFAFDKFPTADAHLGTQMKATGEVMAIGSTLEEATLKAIASLEIDPKTQASLTPDHHVTTTEYIDQLTHPTDQRLFYLLAALQAGWPLAKLATLTQITPFFLSKLQHIAQLIRNIKQVPTSQHLLSAKKYGVSLATMAHYAQTSVATIAAMTADLPFVYKMVDTCAGEFASVTPYFYSTAFGQTNESHPLGHSILVLGSGPIRIGQGIEFDYTTVHCVKAIQQAGYHAIIVNNNPETVSTDFSTSDKLYFEPLTIERLMPIIALEQPAGVIVQFGGQTAINLAHQLTKLGVTVLGTSVSATDLTEDRQSFADCLRLLKIAQAAGTTVTELSGARQAAHAIGYPLLVRPSFVLGGRAMAIVHNDHELTPVIKSAVAAGHGAPILMDQYLAGTECEVDVLSDGTSCFIPGIMEHIEGAGVHSGDSITVYPPQHLSPAVQDKIVTIATKLAQHLHCVGMMNIQFVVTDDVYVIDVNPRASRTVPYMSKVTHLPLAQLATRLILGQSLATLGLVPGLLTPAPQQIAIKAPVFSFNKLPQSPVVLSPEMKSTGETLGIGPTFTTAWHAAMADSYHLETWQTVDGLITDIATVAQPAVQELFAANHLTVTTIANTTDWPAKTKAVGFTLNDQPDNPVAIAALNHGQPLITAIDTLKTLLAVTPTPATI.

Positions 1–401 (MPKNNAIHSI…ATLKAIASLE (401 aa)) are carboxyphosphate synthetic domain. Residues arginine 129, arginine 169, glycine 175, glycine 176, glutamine 208, isoleucine 210, glutamate 215, glycine 241, isoleucine 242, histidine 243, glutamine 284, and glutamate 298 each contribute to the ATP site. In terms of domain architecture, ATP-grasp 1 spans 133-327 (KTLMKRLHQP…IAKIAADIAI (195 aa)). Mg(2+) contacts are provided by glutamine 284, glutamate 298, and asparagine 300. 3 residues coordinate Mn(2+): glutamine 284, glutamate 298, and asparagine 300. 2 oligomerization domain regions span residues 402–542 (IDPK…FGQT) and 402–544 (IDPK…QTNE). 2 carbamoyl phosphate synthetic domain regions span residues 543-927 (NESH…ADSY) and 544-927 (ESHP…ADSY). The ATP-grasp 2 domain occupies 669-858 (ADCLRLLKIA…LAQLATRLIL (190 aa)). ATP is bound by residues arginine 705, glutamine 744, leucine 746, glutamate 750, glycine 775, valine 776, histidine 777, serine 778, and glutamine 818. Mg(2+) is bound by residues glutamine 818 and asparagine 831. The Mn(2+) site is built by glutamine 818 and asparagine 831. Residues 927 to 1020 (YHLETWQTVD…LAVTPTPATI (94 aa)) form the MGS-like domain. Residues 928-1020 (HLETWQTVDG…LAVTPTPATI (93 aa)) are allosteric domain.

It belongs to the CarB family. In terms of assembly, composed of two chains; the small (or glutamine) chain promotes the hydrolysis of glutamine to ammonia, which is used by the large (or ammonia) chain to synthesize carbamoyl phosphate. Tetramer of heterodimers (alpha,beta)4. Requires Mg(2+) as cofactor. It depends on Mn(2+) as a cofactor.

It carries out the reaction hydrogencarbonate + L-glutamine + 2 ATP + H2O = carbamoyl phosphate + L-glutamate + 2 ADP + phosphate + 2 H(+). The enzyme catalyses hydrogencarbonate + NH4(+) + 2 ATP = carbamoyl phosphate + 2 ADP + phosphate + 2 H(+). It functions in the pathway amino-acid biosynthesis; L-arginine biosynthesis; carbamoyl phosphate from bicarbonate: step 1/1. Functionally, large subunit of the glutamine-dependent carbamoyl phosphate synthetase (CPSase). CPSase catalyzes the formation of carbamoyl phosphate from the ammonia moiety of glutamine, carbonate, and phosphate donated by ATP, constituting the first step of the biosynthetic pathway leading to arginine and/or urea. The large subunit (synthetase) binds the substrates ammonia (free or transferred from glutamine from the small subunit), hydrogencarbonate and ATP and carries out an ATP-coupled ligase reaction, activating hydrogencarbonate by forming carboxy phosphate which reacts with ammonia to form carbamoyl phosphate. The chain is Carbamoyl phosphate synthase arginine-specific large chain from Lactiplantibacillus plantarum (strain ATCC BAA-793 / NCIMB 8826 / WCFS1) (Lactobacillus plantarum).